Reading from the N-terminus, the 379-residue chain is Cytochrome b (379 aa).

4 helical membrane-spanning segments follow: residues 33–53 (FGSLLGACLTIQIITGLFLAM), 77–98 (WTIRYLHANGASVFFLCLFIHV), 113–133 (WNVGIILLFSVMATAFMGYVL), and 178–198 (FFALHFVLPFVILALVMIHLL). His-83 and His-97 together coordinate heme b. Residues His-182 and His-196 each coordinate heme b. His-201 lines the a ubiquinone pocket. 4 helical membrane passes run 226-246 (TKDFLGLLLLILLLMVLTLFY), 288-308 (LGGVMALILSILILAIIPLLQ), 320-340 (LSQFLFWILVADLLTLTWIGG), and 347-367 (FITIGQVASILYFLLMVLIMP).

Belongs to the cytochrome b family. As to quaternary structure, the cytochrome bc1 complex contains 11 subunits: 3 respiratory subunits (MT-CYB, CYC1 and UQCRFS1), 2 core proteins (UQCRC1 and UQCRC2) and 6 low-molecular weight proteins (UQCRH/QCR6, UQCRB/QCR7, UQCRQ/QCR8, UQCR10/QCR9, UQCR11/QCR10 and a cleavage product of UQCRFS1). This cytochrome bc1 complex then forms a dimer. The cofactor is heme b.

The protein resides in the mitochondrion inner membrane. In terms of biological role, component of the ubiquinol-cytochrome c reductase complex (complex III or cytochrome b-c1 complex) that is part of the mitochondrial respiratory chain. The b-c1 complex mediates electron transfer from ubiquinol to cytochrome c. Contributes to the generation of a proton gradient across the mitochondrial membrane that is then used for ATP synthesis. The chain is Cytochrome b (MT-CYB) from Lepilemur edwardsi (Milne-Edwards's sportive lemur).